Reading from the N-terminus, the 354-residue chain is Probable trehalose-phosphate phosphatase E (354 aa).

The protein belongs to the trehalose phosphatase family. A divalent metal cation is required as a cofactor.

It catalyses the reaction alpha,alpha-trehalose 6-phosphate + H2O = alpha,alpha-trehalose + phosphate. Its pathway is glycan biosynthesis; trehalose biosynthesis. In terms of biological role, removes the phosphate from trehalose 6-phosphate to produce free trehalose. Trehalose accumulation in plant may improve abiotic stress tolerance. The polypeptide is Probable trehalose-phosphate phosphatase E (TPPE) (Arabidopsis thaliana (Mouse-ear cress)).